Reading from the N-terminus, the 448-residue chain is Acetate kinase (448 aa).

N7 is a Mg(2+) binding site. K14 contributes to the ATP binding site. Substrate is bound at residue R91. The active-site Proton donor/acceptor is D148. ATP is bound by residues 208–212 (HIGNG) and 283–285 (DRR). Position 388 (E388) interacts with Mg(2+).

The protein belongs to the acetokinase family. Homodimer. Mg(2+) serves as cofactor. The cofactor is Mn(2+).

The protein localises to the cytoplasm. It catalyses the reaction acetate + ATP = acetyl phosphate + ADP. It participates in metabolic intermediate biosynthesis; acetyl-CoA biosynthesis; acetyl-CoA from acetate: step 1/2. Functionally, catalyzes the formation of acetyl phosphate from acetate and ATP. Can also catalyze the reverse reaction. In Treponema pallidum (strain Nichols), this protein is Acetate kinase.